The chain runs to 223 residues: MGQKVNPNGIRLGYIRDWRSTWYADSSRYATKLNEDIKVREFLHKKLAAAAVSKIQIERPAQNAKITIHTARPGIVIGKKGDDVEKLRAEVHKLMGIPVQINIEEVRKPEIDAKLVAESVAQQLEKRVMFRRAMKKAMQAAMKSGAKGIKIMVSGRLGGAEIARSEWARDGRVPLQTFRADVDYATAEALTTYGVIGVKVWIYKGEILPGQIAEKKNNKKGAK.

Residues 39–107 (VREFLHKKLA…PVQINIEEVR (69 aa)) form the KH type-2 domain.

The protein belongs to the universal ribosomal protein uS3 family. Part of the 30S ribosomal subunit. Forms a tight complex with proteins S10 and S14.

In terms of biological role, binds the lower part of the 30S subunit head. Binds mRNA in the 70S ribosome, positioning it for translation. In Francisella tularensis subsp. mediasiatica (strain FSC147), this protein is Small ribosomal subunit protein uS3.